The primary structure comprises 119 residues: NAD(P)H-quinone oxidoreductase subunit M (119 aa).

Belongs to the complex I NdhM subunit family. In terms of assembly, NDH-1 can be composed of about 15 different subunits; different subcomplexes with different compositions have been identified which probably have different functions.

Its subcellular location is the cell inner membrane. The enzyme catalyses a plastoquinone + NADH + (n+1) H(+)(in) = a plastoquinol + NAD(+) + n H(+)(out). It catalyses the reaction a plastoquinone + NADPH + (n+1) H(+)(in) = a plastoquinol + NADP(+) + n H(+)(out). NDH-1 shuttles electrons from an unknown electron donor, via FMN and iron-sulfur (Fe-S) centers, to quinones in the respiratory and/or the photosynthetic chain. The immediate electron acceptor for the enzyme in this species is believed to be plastoquinone. Couples the redox reaction to proton translocation, and thus conserves the redox energy in a proton gradient. Cyanobacterial NDH-1 also plays a role in inorganic carbon-concentration. The chain is NAD(P)H-quinone oxidoreductase subunit M from Gloeobacter violaceus (strain ATCC 29082 / PCC 7421).